The chain runs to 346 residues: MRLLFLAVLRPHTGNAVTAQRVRAHLEAAGHVCVLKDAFDFESRSEIANLILAENCEAALALHLYRGGRLLQGHRIPFGVIFGGTDVNEDANQAEKNTVMGRVLEEARFAVAFTESMKEMAQAQWPHAKGKVYVQSQGIATTPNAAFNWNTFLQRSEINQSADNLHIFLLICGLRQVKDPLYLVDAFSAWHQEEPNVHLVIVGPEVDPVFTREVKAKVKRAAGVRLIGEMPQEDLHAVVKNCFAVVNSSVSEGMSAAILEAMDLEVPVLARNIPGNAAVVKHEVTGLLFSNPQEFVHLAKRLVSDPALEKEIVVNGREYVRMYHSWQVERDTYQQLIRKLEGSTED.

The N-terminal stretch at 1 to 16 (MRLLFLAVLRPHTGNA) is a signal peptide.

It belongs to the glycosyltransferase group 1 family. Glycosyltransferase 4 subfamily.

It localises to the secreted. This Homo sapiens (Human) protein is Glycosyltransferase 1 domain-containing protein 1 (GLT1D1).